A 374-amino-acid polypeptide reads, in one-letter code: Chaperone protein DnaJ (374 aa).

The region spanning Asp-5–Gly-70 is the J domain. The segment at Gly-130–Asp-207 adopts a CR-type zinc-finger fold. Zn(2+)-binding residues include Cys-143, Cys-146, Cys-159, Cys-162, Cys-181, Cys-184, Cys-195, and Cys-198. 4 CXXCXGXG motif repeats span residues Cys-143–Gly-150, Cys-159–Gly-166, Cys-181–Gly-188, and Cys-195–Gly-202.

The protein belongs to the DnaJ family. In terms of assembly, homodimer. Zn(2+) is required as a cofactor.

It is found in the cytoplasm. Its function is as follows. Participates actively in the response to hyperosmotic and heat shock by preventing the aggregation of stress-denatured proteins and by disaggregating proteins, also in an autonomous, DnaK-independent fashion. Unfolded proteins bind initially to DnaJ; upon interaction with the DnaJ-bound protein, DnaK hydrolyzes its bound ATP, resulting in the formation of a stable complex. GrpE releases ADP from DnaK; ATP binding to DnaK triggers the release of the substrate protein, thus completing the reaction cycle. Several rounds of ATP-dependent interactions between DnaJ, DnaK and GrpE are required for fully efficient folding. Also involved, together with DnaK and GrpE, in the DNA replication of plasmids through activation of initiation proteins. The polypeptide is Chaperone protein DnaJ (Stenotrophomonas maltophilia (strain K279a)).